We begin with the raw amino-acid sequence, 93 residues long: Beta-defensin 128 (93 aa).

The N-terminal stretch at 1–18 (MKLFLVLIILLFEVLTDG) is a signal peptide. 3 disulfides stabilise this stretch: Cys24-Cys52, Cys32-Cys46, and Cys36-Cys53.

The protein belongs to the beta-defensin family.

Its subcellular location is the secreted. Functionally, has antibacterial activity. In Macaca fascicularis (Crab-eating macaque), this protein is Beta-defensin 128 (DEFB128).